A 395-amino-acid polypeptide reads, in one-letter code: Bifunctional enzyme IspD/IspF (395 aa).

The interval 1–237 (MRTWVLLLAA…DANEPQVTVP (237 aa)) is 2-C-methyl-D-erythritol 4-phosphate cytidylyltransferase. The 2-C-methyl-D-erythritol 2,4-cyclodiphosphate synthase stretch occupies residues 238 to 395 (CVGWGYDVHR…AAVTGLRPMP (158 aa)). A divalent metal cation contacts are provided by D244 and H246. Residues 244 to 246 (DVH) and 270 to 271 (HS) contribute to the 4-CDP-2-C-methyl-D-erythritol 2-phosphate site. H278 is a binding site for a divalent metal cation. 4-CDP-2-C-methyl-D-erythritol 2-phosphate-binding positions include 292–294 (DIG), 297–301 (FPDSD), 368–371 (TTEE), and F375.

It in the N-terminal section; belongs to the IspD/TarI cytidylyltransferase family. IspD subfamily. In the C-terminal section; belongs to the IspF family. A divalent metal cation serves as cofactor.

It carries out the reaction 2-C-methyl-D-erythritol 4-phosphate + CTP + H(+) = 4-CDP-2-C-methyl-D-erythritol + diphosphate. It catalyses the reaction 4-CDP-2-C-methyl-D-erythritol 2-phosphate = 2-C-methyl-D-erythritol 2,4-cyclic diphosphate + CMP. It participates in isoprenoid biosynthesis; isopentenyl diphosphate biosynthesis via DXP pathway; isopentenyl diphosphate from 1-deoxy-D-xylulose 5-phosphate: step 2/6. It functions in the pathway isoprenoid biosynthesis; isopentenyl diphosphate biosynthesis via DXP pathway; isopentenyl diphosphate from 1-deoxy-D-xylulose 5-phosphate: step 4/6. In terms of biological role, bifunctional enzyme that catalyzes the formation of 4-diphosphocytidyl-2-C-methyl-D-erythritol from CTP and 2-C-methyl-D-erythritol 4-phosphate (MEP) (IspD), and catalyzes the conversion of 4-diphosphocytidyl-2-C-methyl-D-erythritol 2-phosphate (CDP-ME2P) to 2-C-methyl-D-erythritol 2,4-cyclodiphosphate (ME-CPP) with a corresponding release of cytidine 5-monophosphate (CMP) (IspF). The chain is Bifunctional enzyme IspD/IspF from Nitratidesulfovibrio vulgaris (strain ATCC 29579 / DSM 644 / CCUG 34227 / NCIMB 8303 / VKM B-1760 / Hildenborough) (Desulfovibrio vulgaris).